The following is a 55-amino-acid chain: Cytochrome c oxidase subunit 7s (55 aa).

Residues 13–35 (LVQDIGVALILGSIAGCFFKYGV) form a helical membrane-spanning segment.

As to quaternary structure, slime mold cytochrome c oxidase consists of at least seven different polypeptides species, subunits I, II, III, IV, V, VI, and VIIe/s in order of MW.

It localises to the mitochondrion inner membrane. The enzyme catalyses 4 Fe(II)-[cytochrome c] + O2 + 8 H(+)(in) = 4 Fe(III)-[cytochrome c] + 2 H2O + 4 H(+)(out). Its function is as follows. This protein is one of the nuclear-coded polypeptide chains of cytochrome c oxidase, the terminal oxidase in mitochondrial electron transport. The polypeptide is Cytochrome c oxidase subunit 7s (cxgS) (Dictyostelium discoideum (Social amoeba)).